The primary structure comprises 380 residues: MGIKGLSQLIADLAPFAVKEGEIKNFFGRKVAIDASMCLYQFLIAVRAEGAQLTSVDGETTSHLMGTFYRTIRLLENGIKPVYVFDGKPPDLKSGELTKRAEKREEAQKALDKATEAGVTEDIDKFNRRLVKVTKQHSNEAKELLKLMGVPYVDAPCEAEAQCAALVKGGKVYATATEDMDALTFGSNILLRHLTFSEARKMPVQEFNYDKILQGLELTRDEFIDLCILLGCDYCDSIRGIGPKKAVELINKHRTIEKILENLDTKKYVVPENWNYQQARVLFKEPEVANPEEVELKWGEPDEEGLVKYLCGDRQFNEDRIRAGAKKILKTKSTATQGRLDSFFKVLPSTPNPKRKIEDKKTPASKKAKTTGGKPGRKPK.

The interval 1-104 (MGIKGLSQLI…GELTKRAEKR (104 aa)) is N-domain. Residue D34 participates in Mg(2+) binding. The DNA site is built by R47 and R70. D86, E158, E160, D179, and D181 together coordinate Mg(2+). The interval 122–253 (DIDKFNRRLV…KKAVELINKH (132 aa)) is I-domain. Residue E158 coordinates DNA. DNA-binding residues include G231 and D233. Position 233 (D233) interacts with Mg(2+). Residues 336-344 (TQGRLDSFF) are interaction with PCNA. The disordered stretch occupies residues 342-380 (SFFKVLPSTPNPKRKIEDKKTPASKKAKTTGGKPGRKPK). Basic residues predominate over residues 363-380 (PASKKAKTTGGKPGRKPK).

Belongs to the XPG/RAD2 endonuclease family. FEN1 subfamily. Interacts with PCNA. Three molecules of FEN1 bind to one PCNA trimer with each molecule binding to one PCNA monomer. PCNA stimulates the nuclease activity without altering cleavage specificity. Mg(2+) is required as a cofactor. Post-translationally, phosphorylated. Phosphorylation upon DNA damage induces relocalization to the nuclear plasma.

Its subcellular location is the nucleus. The protein localises to the nucleolus. It localises to the nucleoplasm. The protein resides in the mitochondrion. Its function is as follows. Structure-specific nuclease with 5'-flap endonuclease and 5'-3' exonuclease activities involved in DNA replication and repair. During DNA replication, cleaves the 5'-overhanging flap structure that is generated by displacement synthesis when DNA polymerase encounters the 5'-end of a downstream Okazaki fragment. It enters the flap from the 5'-end and then tracks to cleave the flap base, leaving a nick for ligation. Also involved in the long patch base excision repair (LP-BER) pathway, by cleaving within the apurinic/apyrimidinic (AP) site-terminated flap. Acts as a genome stabilization factor that prevents flaps from equilibrating into structures that lead to duplications and deletions. Also possesses 5'-3' exonuclease activity on nicked or gapped double-stranded DNA, and exhibits RNase H activity. Also involved in replication and repair of rDNA and in repairing mitochondrial DNA. The sequence is that of Flap endonuclease 1 from Aedes aegypti (Yellowfever mosquito).